Consider the following 420-residue polypeptide: Hemojuvelin (420 aa).

The signal sequence occupies residues 1-32; the sequence is MGQSPSPRSPHGSPPTLSTLTLLLLLCGQAHS. Tyrosine 43 carries the post-translational modification Phosphotyrosine. Asparagine 111 is a glycosylation site (N-linked (GlcNAc...) asparagine). The tract at residues 113–135 is disordered; sequence SRQGPTAPPPARGPALPGAGPAP. Residues 125–134 are compositionally biased toward low complexity; it reads GPALPGAGPA. 2 disulfides stabilise this stretch: cysteine 141/cysteine 223 and cysteine 160/cysteine 310. N-linked (GlcNAc...) asparagine glycosylation is found at asparagine 206 and asparagine 365. Residue aspartate 393 is the site of GPI-anchor amidated aspartate attachment. The propeptide at 394–420 is removed in mature form; the sequence is AGPPLSPAICLVPLLSALFVLWLCFSK.

The protein belongs to the repulsive guidance molecule (RGM) family. In terms of assembly, interacts with BMP2 and BMP4. Interacts with BMP6. Interacts with BMPR1B. Interacts with TMPRSS6. Post-translationally, autocatalytically cleaved at low pH; the two chains remain linked via two disulfide bonds. Also proteolytically processed by TMPRSS6, several fragments being released in the extracellular space; regulates HJV activity in BMP signaling and thefore iron homeostasis. Muscle cell lineage.

It localises to the cell membrane. Acts as a bone morphogenetic protein (BMP) coreceptor. Through enhancement of BMP signaling regulates hepcidin (HAMP) expression and regulates iron homeostasis. This Mus musculus (Mouse) protein is Hemojuvelin.